The sequence spans 475 residues: UDP-N-acetylmuramate--L-alanine ligase (475 aa).

Position 118 to 124 (118 to 124) interacts with ATP; that stretch reads GTHGKTT.

This sequence belongs to the MurCDEF family.

It localises to the cytoplasm. The catalysed reaction is UDP-N-acetyl-alpha-D-muramate + L-alanine + ATP = UDP-N-acetyl-alpha-D-muramoyl-L-alanine + ADP + phosphate + H(+). It functions in the pathway cell wall biogenesis; peptidoglycan biosynthesis. Cell wall formation. This Thermosynechococcus vestitus (strain NIES-2133 / IAM M-273 / BP-1) protein is UDP-N-acetylmuramate--L-alanine ligase.